A 263-amino-acid chain; its full sequence is MFGFFKSPGNNKLPNESSNNKGGTITAGRRTSSEPILITPDFDDDDKYKNGFNDSGGLQSQTTEELEKYAVYKAEETTKGVNNCLKIAEDIRSDGARTLEMLHQQGEQINRTHEMAVDMDKDLSRGEKLLNNLGGMFSKPWKPKKTKNITGPMITPDKPSKKSENHKEEREKLGLGAKGRSSSQPALDQPTNALQKVEQEKAKQDDGLSDLSDILGDLKSMAVDMGSEIDKQNKALDHLGDDVDELNSRVQGANQRARHLLSK.

Disordered regions lie at residues 1 to 61 (MFGF…LQSQ) and 132 to 209 (NLGG…DGLS). 2 stretches are compositionally biased toward polar residues: residues 8-34 (PGNN…TSSE) and 52-61 (FNDSGGLQSQ). Basic and acidic residues predominate over residues 158–173 (KPSKKSENHKEEREKL). Positions 180 to 194 (RSSSQPALDQPTNAL) are enriched in polar residues. Over residues 197-206 (VEQEKAKQDD) the composition is skewed to basic and acidic residues. In terms of domain architecture, t-SNARE coiled-coil homology spans 198–260 (EQEKAKQDDG…QGANQRARHL (63 aa)).

The protein belongs to the SNAP-25 family.

The protein resides in the membrane. It is found in the cytoplasm. Functionally, vesicle trafficking protein that functions in the secretory pathway. The polypeptide is Putative SNAP25 homologous protein SNAP30 (SNAP30) (Arabidopsis thaliana (Mouse-ear cress)).